Reading from the N-terminus, the 237-residue chain is MQTNDPVFAGWDGSVIQARQLQRQLARRVVLDDAVSATPQLLAGFDVGFEDDGQTTRAAAVLLDAQTLLPLETHIARVPTSMPYVPGLLSFRELPALLQALALLSRTPDLVFIDGQGIAHPRKLGIAAHFGVVTGLPCIGIAKQRLAGSFAEPGPERGDHTPILLGGSQIGWALRSKPRCNPLIVSPGHRVSMQGALDWTLRTLRAYRLPEPTRLADRLASRRGEVTVPAGYSGHLL.

Mg(2+) contacts are provided by Asp-46 and Asp-114.

The protein belongs to the endonuclease V family. Requires Mg(2+) as cofactor.

Its subcellular location is the cytoplasm. It carries out the reaction Endonucleolytic cleavage at apurinic or apyrimidinic sites to products with a 5'-phosphate.. DNA repair enzyme involved in the repair of deaminated bases. Selectively cleaves double-stranded DNA at the second phosphodiester bond 3' to a deoxyinosine leaving behind the intact lesion on the nicked DNA. This chain is Endonuclease V, found in Xanthomonas axonopodis pv. citri (strain 306).